The primary structure comprises 163 residues: MALNLQDKQAIVAEVNEAAKGALSAVIADSRGVTVEKMTELRKSAREAGVTMRVVRNTLLRRAVEGTDYECLKDTFVGPTLIAFSNEHPGEAARLFKEFAKANDKFEIKGAAFEGKIQDVEFLATLPTYEEAIARLMGTMKEAAAGKLARTFAALRDKLQEAA.

The protein belongs to the universal ribosomal protein uL10 family. Part of the ribosomal stalk of the 50S ribosomal subunit. The N-terminus interacts with L11 and the large rRNA to form the base of the stalk. The C-terminus forms an elongated spine to which L12 dimers bind in a sequential fashion forming a multimeric L10(L12)X complex.

Forms part of the ribosomal stalk, playing a central role in the interaction of the ribosome with GTP-bound translation factors. The protein is Large ribosomal subunit protein uL10 of Haemophilus influenzae (strain 86-028NP).